A 217-amino-acid chain; its full sequence is MVAWRWACLICLAFSLTTLVQRGSGDTGGFRLEDAVEGTSSVKQRWDHVTTTTRRPGATRAPAKPAGPPAEDDFNLADALDDQNDRDHDRKKPSIGGGGFSDKDLEDIVGGGDYKPDKGKGGGQYGGGDNSDDSGMSAETGTIAGVASALAMALIGAVSSYISYQQKKFCFSIQQGLNADYVKGENLEAVVCEEPQVKYSALQTQSTEPPPPEPPRI.

The signal sequence occupies residues 1 to 25; it reads MVAWRWACLICLAFSLTTLVQRGSG. Topologically, residues 26-141 are extracellular; that stretch reads DTGGFRLEDA…DDSGMSAETG (116 aa). Residues 36-136 are disordered; that stretch reads VEGTSSVKQR…GGDNSDDSGM (101 aa). Residues 50-64 are compositionally biased toward low complexity; sequence TTTTRRPGATRAPAK. The segment covering 70 to 82 has biased composition (acidic residues); the sequence is AEDDFNLADALDD. Positions 83–92 are enriched in basic and acidic residues; that stretch reads QNDRDHDRKK. Ser-134 carries O-linked (Xyl...) (chondroitin sulfate) serine glycosylation. The chain crosses the membrane as a helical span at residues 142-162; the sequence is TIAGVASALAMALIGAVSSYI. Residues 163 to 217 lie on the Cytoplasmic side of the membrane; that stretch reads SYQQKKFCFSIQQGLNADYVKGENLEAVVCEEPQVKYSALQTQSTEPPPPEPPRI.

It belongs to the CD99 family. O-glycosylated.

It localises to the cell membrane. Its subcellular location is the cell junction. The protein resides in the secreted. Plays a role in a late step of leukocyte extravasation helping cells to overcome the endothelial basement membrane. Acts at the same site as, but independently of, PECAM1. Homophilic adhesion molecule, but these interactions may not be required for cell aggregation. The chain is CD99 antigen-like protein 2 (CD99L2) from Bos taurus (Bovine).